The following is a 325-amino-acid chain: Biotin synthase (325 aa).

A Radical SAM core domain is found at 52 to 281 (YQKDDVVLCS…AKPLLICGGR (230 aa)). [4Fe-4S] cluster is bound by residues cysteine 70, cysteine 74, and cysteine 77. Residues serine 114, cysteine 146, and cysteine 206 each coordinate [2Fe-2S] cluster.

Belongs to the radical SAM superfamily. Biotin synthase family. In terms of assembly, homodimer. The cofactor is [4Fe-4S] cluster. [2Fe-2S] cluster is required as a cofactor.

It catalyses the reaction (4R,5S)-dethiobiotin + (sulfur carrier)-SH + 2 reduced [2Fe-2S]-[ferredoxin] + 2 S-adenosyl-L-methionine = (sulfur carrier)-H + biotin + 2 5'-deoxyadenosine + 2 L-methionine + 2 oxidized [2Fe-2S]-[ferredoxin]. Its pathway is cofactor biosynthesis; biotin biosynthesis; biotin from 7,8-diaminononanoate: step 2/2. Its function is as follows. Catalyzes the conversion of dethiobiotin (DTB) to biotin by the insertion of a sulfur atom into dethiobiotin via a radical-based mechanism. The sequence is that of Biotin synthase from Syntrophus aciditrophicus (strain SB).